The chain runs to 486 residues: Katanin p60 ATPase-containing subunit A1 (486 aa).

Positions 103 to 174 (RSSPLPVRRP…NKAEVSEKEV (72 aa)) are disordered. Positions 143–174 (NGDRAKPLKGKEKKEAKPKDDKNKAEVSEKEV) are enriched in basic and acidic residues. Residue 244–251 (GPPGTGKT) participates in ATP binding.

This sequence belongs to the AAA ATPase family. Katanin p60 subunit A1 subfamily. In terms of assembly, can homooligomerize into hexameric rings, which may be promoted by interaction with microtubules. Interacts with katnb1, which may serve as a targeting subunit.

The protein resides in the cytoplasm. Its subcellular location is the cytoskeleton. The protein localises to the microtubule organizing center. It localises to the centrosome. It is found in the spindle pole. The protein resides in the spindle. It catalyses the reaction n ATP + n H2O + a microtubule = n ADP + n phosphate + (n+1) alpha/beta tubulin heterodimers.. With respect to regulation, ATPase activity is stimulated by microtubules, which promote homooligomerization. ATP-dependent microtubule severing is stimulated by interaction with katnb1. Functionally, catalytic subunit of a complex which severs microtubules in an ATP-dependent manner. Microtubule severing may promote rapid reorganization of cellular microtubule arrays and the release of microtubules from the centrosome following nucleation. The chain is Katanin p60 ATPase-containing subunit A1 (katna1) from Salmo salar (Atlantic salmon).